The chain runs to 323 residues: Global nitrogen regulator NrpRI (323 aa).

Residues 11 to 76 form a winged helix-turn-helix region; sequence IEIMRVIHES…TLTDLGENEM (66 aa). The segment at 86-323 is NRD; the sequence is GFVISRIEEM…MLDYQTMKEI (238 aa).

This sequence belongs to the NrpR family. As to quaternary structure, forms a complex with NrpRII and the general archaeal transcription factors TBP and TFB. Interacts directly with NrpRII.

Its activity is regulated as follows. Under nitrogen limitation, binding of 2-oxoglutarate to the NrpRI/NrpRII complex decreases the binding affinity of NrpRI to DNA as well as the binding affinity of NrpRII to TBP and TFB, which leads to removal of the complex from the operator, RNA polymerase recruitment and initiation of transcription. Functionally, plays a major role in nitrogen regulation. Under nitrogen sufficiency, binds to the nifH and the glnk1 promoters, leading to repression of the transcription of the genes. This chain is Global nitrogen regulator NrpRI, found in Methanosarcina mazei (strain ATCC BAA-159 / DSM 3647 / Goe1 / Go1 / JCM 11833 / OCM 88) (Methanosarcina frisia).